A 694-amino-acid chain; its full sequence is Katanin p80 WD40 repeat-containing subunit B1 (694 aa).

WD repeat units follow at residues 18–58 (AHSS…CIMS), 61–100 (GHTS…ILRT), 103–142 (GHKA…CVFR), 145–186 (GHTQ…TEFT), 188–226 (HTSA…MIGS), and 229–269 (GETG…DVVH). Disordered regions lie at residues 319–410 (KPIP…PFPA) and 470–492 (TTSA…STGI). The span at 327–349 (ALGTTLRRNYERPTTSCTGQEMK) shows a compositional bias: polar residues. Residues 350–378 (QSSEADRRSPEGERRSPSSEDEKEDKESS) show a composition bias toward basic and acidic residues. The span at 470–481 (TTSASSPSRPVV) shows a compositional bias: low complexity. Positions 482–492 (NTTKPKPSTGI) are enriched in polar residues.

This sequence belongs to the WD repeat KATNB1 family. As to quaternary structure, interacts with katna1. This interaction enhances the microtubule binding and severing activity of katna1 and also targets this activity to the centrosome.

It is found in the cytoplasm. Its subcellular location is the cytoskeleton. The protein resides in the microtubule organizing center. It localises to the centrosome. The protein localises to the spindle pole. It is found in the spindle. Functionally, participates in a complex which severs microtubules in an ATP-dependent manner. May act to target the enzymatic subunit of this complex to sites of action such as the centrosome. Microtubule severing may promote rapid reorganization of cellular microtubule arrays and the release of microtubules from the centrosome following nucleation. The chain is Katanin p80 WD40 repeat-containing subunit B1 (katnb1) from Danio rerio (Zebrafish).